The sequence spans 255 residues: Cytochrome c oxidase subunit 3 (255 aa).

The next 7 helical transmembrane spans lie at 12-29, 57-77, 91-111, 126-146, 155-175, 196-216, and 235-255; these read INII…STGL, LKYL…INGI, IFGM…WGFF, LEAF…ISLI, YFEV…FLSF, FNVL…FALM, and GMYW…LFLL.

This sequence belongs to the cytochrome c oxidase subunit 3 family. As to quaternary structure, component of the cytochrome c oxidase (complex IV, CIV), a multisubunit enzyme composed of a catalytic core of 3 subunits and several supernumerary subunits. The complex exists as a monomer or a dimer and forms supercomplexes (SCs) in the inner mitochondrial membrane with ubiquinol-cytochrome c oxidoreductase (cytochrome b-c1 complex, complex III, CIII).

Its subcellular location is the mitochondrion inner membrane. It carries out the reaction 4 Fe(II)-[cytochrome c] + O2 + 8 H(+)(in) = 4 Fe(III)-[cytochrome c] + 2 H2O + 4 H(+)(out). Functionally, component of the cytochrome c oxidase, the last enzyme in the mitochondrial electron transport chain which drives oxidative phosphorylation. The respiratory chain contains 3 multisubunit complexes succinate dehydrogenase (complex II, CII), ubiquinol-cytochrome c oxidoreductase (cytochrome b-c1 complex, complex III, CIII) and cytochrome c oxidase (complex IV, CIV), that cooperate to transfer electrons derived from NADH and succinate to molecular oxygen, creating an electrochemical gradient over the inner membrane that drives transmembrane transport and the ATP synthase. Cytochrome c oxidase is the component of the respiratory chain that catalyzes the reduction of oxygen to water. Electrons originating from reduced cytochrome c in the intermembrane space (IMS) are transferred via the dinuclear copper A center (CU(A)) of subunit 2 and heme A of subunit 1 to the active site in subunit 1, a binuclear center (BNC) formed by heme A3 and copper B (CU(B)). The BNC reduces molecular oxygen to 2 water molecules using 4 electrons from cytochrome c in the IMS and 4 protons from the mitochondrial matrix. The chain is Cytochrome c oxidase subunit 3 (MT-CO3) from Theileria annulata.